The following is a 767-amino-acid chain: Probable NADP-dependent malic enzyme (767 aa).

The segment at 1 to 430 (MDEMNKINYT…QLGSRLNPTA (430 aa)) is malic enzyme. Tyrosine 42 (proton donor) is an active-site residue. Catalysis depends on lysine 97, which acts as the Proton acceptor. A divalent metal cation contacts are provided by glutamate 139, aspartate 140, and aspartate 165. Residues 198–201 (AGAA), asparagine 290, and asparagine 322 contribute to the NADP(+) site. Residues 431–767 (NYMNFLAEKI…FACVEAIKEV (337 aa)) form a phosphate acetyltransferase region.

The protein in the N-terminal section; belongs to the malic enzymes family. This sequence in the C-terminal section; belongs to the phosphate acetyltransferase and butyryltransferase family. Mg(2+) is required as a cofactor. Mn(2+) serves as cofactor.

It catalyses the reaction (S)-malate + NADP(+) = pyruvate + CO2 + NADPH. The enzyme catalyses oxaloacetate + H(+) = pyruvate + CO2. The polypeptide is Probable NADP-dependent malic enzyme (Rickettsia prowazekii (strain Madrid E)).